The sequence spans 117 residues: uncharacterized protein (117 aa).

A helical membrane pass occupies residues Val10–Val32.

The protein localises to the membrane. This is an uncharacterized protein from Rickettsia conorii (strain ATCC VR-613 / Malish 7).